Reading from the N-terminus, the 379-residue chain is MTAPAGFLPRVGRLIAVALTAVFLLAPTGAEAASRIKDLADFEGVRDNILVGYGLVVGLKGTGDKLDDVTFTKESLIGMLERLGVNTREGKLDPDNVAAVMVTGTLPPFARQGSRIDVTISALGTAKSLAGGTLMVTPLIGADGEVYAVAQGQAQIGGYAVQGQSASVQKGVPTSGRIPNGALVEAEVPFNLSAMESVKISLRNPDFTTARRIAQAINAFLGTELARPLDPGTVLVAVTAGYEGNAVALLTDIEQLLVEPDTVARVVIDEATGTIVIGEKVRINTVAIAQGNLTIRVTETPQVSQPAPFSQGGQTAVVPRTNIQVDEGKDNKLTVVNGGVNLQDLVNSLNALGVGPRDMISILQAIKSAGAMQAEIQVM.

An N-terminal signal peptide occupies residues 1–32; it reads MTAPAGFLPRVGRLIAVALTAVFLLAPTGAEA.

This sequence belongs to the FlgI family. As to quaternary structure, the basal body constitutes a major portion of the flagellar organelle and consists of four rings (L,P,S, and M) mounted on a central rod.

It localises to the periplasm. The protein resides in the bacterial flagellum basal body. In terms of biological role, assembles around the rod to form the L-ring and probably protects the motor/basal body from shearing forces during rotation. This chain is Flagellar P-ring protein, found in Rhodospirillum rubrum (strain ATCC 11170 / ATH 1.1.1 / DSM 467 / LMG 4362 / NCIMB 8255 / S1).